The chain runs to 169 residues: Probable inosine/xanthosine triphosphatase (169 aa).

Asp-58 contacts Mg(2+).

Belongs to the YjjX NTPase family. As to quaternary structure, homodimer. Requires Mg(2+) as cofactor. Mn(2+) is required as a cofactor.

The enzyme catalyses XTP + H2O = XDP + phosphate + H(+). It carries out the reaction ITP + H2O = IDP + phosphate + H(+). In terms of biological role, phosphatase that hydrolyzes non-canonical purine nucleotides such as XTP and ITP to their respective diphosphate derivatives. Probably excludes non-canonical purines from DNA/RNA precursor pool, thus preventing their incorporation into DNA/RNA and avoiding chromosomal lesions. This is Probable inosine/xanthosine triphosphatase from Archaeoglobus fulgidus (strain ATCC 49558 / DSM 4304 / JCM 9628 / NBRC 100126 / VC-16).